Consider the following 185-residue polypeptide: Ribosome-recycling factor (185 aa).

The interval 138-185 (ALKKQEKDGEITEDEERRLEKEVQKVTDESTKKIDQMADNKRKEIIQG) is disordered.

It belongs to the RRF family.

It localises to the cytoplasm. Its function is as follows. Responsible for the release of ribosomes from messenger RNA at the termination of protein biosynthesis. May increase the efficiency of translation by recycling ribosomes from one round of translation to another. This chain is Ribosome-recycling factor, found in Lactobacillus delbrueckii subsp. bulgaricus (strain ATCC BAA-365 / Lb-18).